A 664-amino-acid polypeptide reads, in one-letter code: DNA ligase (664 aa).

Residues 32–36 and 80–81 each bind NAD(+); these read DKEYD and SL. K122 (N6-AMP-lysine intermediate) is an active-site residue. R144, E178, and K314 together coordinate NAD(+). Zn(2+) is bound by residues C407, C410, C423, and C429. One can recognise a BRCT domain in the interval 587-664; that stretch reads IDENPFMDKT…NEEEFSNKIK (78 aa).

This sequence belongs to the NAD-dependent DNA ligase family. LigA subfamily. Mg(2+) serves as cofactor. It depends on Mn(2+) as a cofactor.

The catalysed reaction is NAD(+) + (deoxyribonucleotide)n-3'-hydroxyl + 5'-phospho-(deoxyribonucleotide)m = (deoxyribonucleotide)n+m + AMP + beta-nicotinamide D-nucleotide.. Its function is as follows. DNA ligase that catalyzes the formation of phosphodiester linkages between 5'-phosphoryl and 3'-hydroxyl groups in double-stranded DNA using NAD as a coenzyme and as the energy source for the reaction. It is essential for DNA replication and repair of damaged DNA. This chain is DNA ligase, found in Clostridium botulinum (strain Okra / Type B1).